A 445-amino-acid chain; its full sequence is FAS-associated factor 2 (445 aa).

Residue alanine 2 is modified to N-acetylalanine. In terms of domain architecture, UBA spans glutamate 12–glutamine 48. At lysine 167 the chain carries N6-acetyllysine. A coiled-coil region spans residues serine 275–leucine 350. Residues alanine 299–serine 361 are disordered. Basic and acidic residues predominate over residues alanine 303–glutamate 348. Residues aspartate 357–valine 439 enclose the UBX domain.

In terms of assembly, identified in a complex that contains SEL1L, OS9, FAF2/UBXD8, UBE2J1/UBC6E and AUP1. Interacts with YOD1. Interacts (via N-terminus) with UBQLN2 (via C-terminus). Interacts with PNPLA2 and UBAC2. Interacts with ZFAND2B; probably through VCP. Interacts with LMBR1L. As to expression, broadly expressed, with highest levels in brain.

The protein localises to the cytoplasm. It is found in the lipid droplet. It localises to the endoplasmic reticulum. Its function is as follows. Plays an important role in endoplasmic reticulum-associated degradation (ERAD) that mediates ubiquitin-dependent degradation of misfolded endoplasmic reticulum proteins. By controlling the steady-state expression of the IGF1R receptor, indirectly regulates the insulin-like growth factor receptor signaling pathway. Involved in inhibition of lipid droplet degradation by binding to phospholipase PNPL2 and inhibiting its activity by promoting dissociation of PNPL2 from its endogenous activator, ABHD5 which inhibits the rate of triacylglycerol hydrolysis. Involved in stress granule disassembly: associates with ubiquitinated G3BP1 in response to heat shock, thereby promoting interaction between ubiquitinated G3BP1 and VCP, followed by G3BP1 extraction from stress granules and stress granule disassembly. This Homo sapiens (Human) protein is FAS-associated factor 2.